Reading from the N-terminus, the 338-residue chain is Protein WVD2-like 2 (338 aa).

The segment covering 1-14 (MGRELVDKHMDKKA) has biased composition (basic and acidic residues). A disordered region spans residues 1–150 (MGRELVDKHM…SFSVASSSAT (150 aa)). Composition is skewed to polar residues over residues 15–37 (NSLT…STNE) and 59–69 (QGITETPGSHK). The segment covering 100-115 (NNSLGNGASHNSSSAS) has biased composition (low complexity). Residues 128-138 (RIPDHKMHHDE) are compositionally biased toward basic and acidic residues. A coiled-coil region spans residues 177-214 (REFYQKLEEKQKALEAEKRENEKRLKEEQEAVTKQLRK). The interval 222 to 338 (PVPSFYQEGP…GENGVGVVEE (117 aa)) is disordered. Over residues 288-300 (TNSVPRTPNSSSK) the composition is skewed to polar residues.

It belongs to the TPX2 family. As to expression, expressed in seedlings.

Its subcellular location is the cytoplasm. It is found in the cytoskeleton. In terms of biological role, microtubule-associated protein (MAP) that regulates the orientation of interphase cortical microtubules. The protein is Protein WVD2-like 2 of Arabidopsis thaliana (Mouse-ear cress).